The chain runs to 120 residues: Ig heavy chain V region AC38 15.3 (120 aa).

The segment at 1–98 (QVQLLQPGTE…EDSAVYYCAR (98 aa)) is v segment. The cysteines at positions 22 and 96 are disulfide-linked. The tract at residues 99-105 (WDYEGDR) is d segment. Residues 106–120 (YFDVWGTGTTVTVSS) form a j segment region.

The chain is Ig heavy chain V region AC38 15.3 from Mus musculus (Mouse).